The sequence spans 293 residues: Indole-3-glycerol phosphate synthase (293 aa).

The protein belongs to the TrpC family.

The enzyme catalyses 1-(2-carboxyphenylamino)-1-deoxy-D-ribulose 5-phosphate + H(+) = (1S,2R)-1-C-(indol-3-yl)glycerol 3-phosphate + CO2 + H2O. Its pathway is amino-acid biosynthesis; L-tryptophan biosynthesis; L-tryptophan from chorismate: step 4/5. The polypeptide is Indole-3-glycerol phosphate synthase (Prochlorococcus marinus (strain SARG / CCMP1375 / SS120)).